The sequence spans 610 residues: ABC transporter ATP-binding protein ARB1 (610 aa).

The disordered stretch occupies residues 1-43 (MPPVSASKAKRDAKKAEREAKKAAAGKTIRKLGRKKEAAAEES). Phosphoserine is present on residues Ser-43 and Ser-65. ABC transporter domains lie at 82 to 323 (IKLS…TNQM) and 393 to 610 (LAFD…NVVL). 114–121 (GENGCGKS) contacts ATP. Position 196 is a phosphoserine (Ser-196). 428–435 (GPNGVGKS) lines the ATP pocket. Phosphothreonine is present on Thr-446.

It belongs to the ABC transporter superfamily. ABCF family. EF3 subfamily. In terms of assembly, interacts with LSG1.

It localises to the cytoplasm. The protein resides in the nucleus. It carries out the reaction ATP + H2O = ADP + phosphate + H(+). ATPase that stimulates 40S and 60S ribosome biogenesis. Also involved in ribosome-associated quality control (RQC) pathway, a pathway that mediates ubiquitination and extraction of incompletely synthesized nascent chains for proteasomal degradation: localizes to the ribosomal E-site and stimulates VMS1-dependent tRNA cleavage. The protein is ABC transporter ATP-binding protein ARB1 (ARB1) of Saccharomyces cerevisiae (strain ATCC 204508 / S288c) (Baker's yeast).